Consider the following 239-residue polypeptide: ATP-dependent dethiobiotin synthetase BioD (239 aa).

Residue 15 to 20 (EIGKTF) participates in ATP binding. Residue Thr19 participates in Mg(2+) binding. Lys40 is an active-site residue. ATP is bound by residues Asp57, 118–121 (EGVG), and 178–179 (NH). Mg(2+) is bound by residues Asp57 and Glu118.

Belongs to the dethiobiotin synthetase family. Homodimer. It depends on Mg(2+) as a cofactor.

The protein resides in the cytoplasm. It carries out the reaction (7R,8S)-7,8-diammoniononanoate + CO2 + ATP = (4R,5S)-dethiobiotin + ADP + phosphate + 3 H(+). It functions in the pathway cofactor biosynthesis; biotin biosynthesis; biotin from 7,8-diaminononanoate: step 1/2. In terms of biological role, catalyzes a mechanistically unusual reaction, the ATP-dependent insertion of CO2 between the N7 and N8 nitrogen atoms of 7,8-diaminopelargonic acid (DAPA, also called 7,8-diammoniononanoate) to form a ureido ring. This chain is ATP-dependent dethiobiotin synthetase BioD, found in Burkholderia ambifaria (strain ATCC BAA-244 / DSM 16087 / CCUG 44356 / LMG 19182 / AMMD) (Burkholderia cepacia (strain AMMD)).